Reading from the N-terminus, the 249-residue chain is Carbohydrate deacetylase (249 aa).

Residues His-60 and His-125 each coordinate Mg(2+).

This sequence belongs to the YdjC deacetylase family. As to quaternary structure, homodimer. Mg(2+) serves as cofactor.

In terms of biological role, probably catalyzes the deacetylation of acetylated carbohydrates an important step in the degradation of oligosaccharides. The protein is Carbohydrate deacetylase of Thermoanaerobacter pseudethanolicus (strain ATCC 33223 / 39E) (Clostridium thermohydrosulfuricum).